The chain runs to 198 residues: KinB-signaling pathway activation protein (198 aa).

A run of 6 helical transmembrane segments spans residues 9–29, 42–62, 90–110, 117–137, 146–166, and 173–193; these read FFFS…FALK, AGQI…FSVI, LQLF…FLFF, LAGY…TAYI, TFVS…FPAL, and WLYL…LMLP.

Its subcellular location is the cell membrane. In terms of biological role, involved in the activation of the KinB signaling pathway of sporulation. This is KinB-signaling pathway activation protein (kbaA) from Bacillus subtilis (strain 168).